The primary structure comprises 918 residues: Isoleucine--tRNA ligase 1 (918 aa).

Positions 57–67 (PYANGDIHIGH) match the 'HIGH' region motif. Residue Glu-553 participates in L-isoleucyl-5'-AMP binding. A 'KMSKS' region motif is present at residues 594-598 (KMSKS). Lys-597 contacts ATP. Zn(2+) is bound by residues Cys-885, Cys-888, Cys-905, and Cys-908.

It belongs to the class-I aminoacyl-tRNA synthetase family. IleS type 1 subfamily. As to quaternary structure, monomer. Zn(2+) is required as a cofactor.

It localises to the cytoplasm. The catalysed reaction is tRNA(Ile) + L-isoleucine + ATP = L-isoleucyl-tRNA(Ile) + AMP + diphosphate. Functionally, catalyzes the attachment of isoleucine to tRNA(Ile). As IleRS can inadvertently accommodate and process structurally similar amino acids such as valine, to avoid such errors it has two additional distinct tRNA(Ile)-dependent editing activities. One activity is designated as 'pretransfer' editing and involves the hydrolysis of activated Val-AMP. The other activity is designated 'posttransfer' editing and involves deacylation of mischarged Val-tRNA(Ile). The polypeptide is Isoleucine--tRNA ligase 1 (Oceanobacillus iheyensis (strain DSM 14371 / CIP 107618 / JCM 11309 / KCTC 3954 / HTE831)).